The sequence spans 1174 residues: K(+) efflux antiporter 2, chloroplastic (1174 aa).

The transit peptide at 1 to 57 (MDFASSVQRQSMFHGGADFASYCLPNRMISAKLCPKGLGGTRFWDPMIDSKVRSAIR) directs the protein to the chloroplast. At 58–565 (SKRNVSYRSS…MFPQQEVNEE (508 aa)) the chain is on the stromal side. The interval 119–141 (GSDDREVTFSKEEKDTREQDSAP) is disordered. Positions 142 to 350 (SLEELRDLLN…ALQRAEKTLF (209 aa)) form a coiled coil. Lys-170 carries the post-translational modification N6-acetyllysine; by NSI. The span at 420–448 (EAEGEAEKSKNVVLTKKQEVQKDLPRESS) shows a compositional bias: basic and acidic residues. A disordered region spans residues 420–457 (EAEGEAEKSKNVVLTKKQEVQKDLPRESSSHNGTKTSL). A helical membrane pass occupies residues 566–586 (EASLLDVLWLLLASVIFVPLF). The Chloroplast intermembrane segment spans residues 587–592 (QKIPGG). The chain crosses the membrane as a helical span at residues 593-613 (SPVLGYLAAGILIGPYGLSII). At 614-620 (RNVHGTK) the chain is on the stromal side. A helical transmembrane segment spans residues 621–641 (AIAEFGVVFLLFNIGLELSVE). The Chloroplast intermembrane portion of the chain corresponds to 642-648 (RLSSMKK). The chain crosses the membrane as a helical span at residues 649-669 (YVFGLGSAQVLVTAAVIGLIT). Residues 670–678 (HYVAGQAGP) are Stromal-facing. The helical transmembrane segment at 679 to 699 (AAIVIGNGLALSSTAVVLQVL) threads the bilayer. Topologically, residues 700–713 (QERGESTSRHGRAT) are chloroplast intermembrane. Residues 714 to 734 (FSVLLFQDLAVVVLLILIPLI) traverse the membrane as a helical segment. The Stromal segment spans residues 735-746 (SPNSSKGGIGFQ). A helical membrane pass occupies residues 747-767 (AIAEALGLAAIKAAVAITGII). The Chloroplast intermembrane portion of the chain corresponds to 768–807 (AGGRLLLRPIYKQIAENRNAEIFSANTLLVILGTSLLTAR). The helical transmembrane segment at 808 to 828 (AGLSMALGAFLAGLLLAETEF) threads the bilayer. Over 829-841 (SLQVESDIAPYRG) the chain is Stromal. The chain crosses the membrane as a helical span at residues 842–862 (LLLGLFFMTVGMSIDPKLLLA). Over 863-865 (NFP) the chain is Chloroplast intermembrane. A helical membrane pass occupies residues 866–886 (LIMGTLGLLLVGKTILVVIIG). The Stromal portion of the chain corresponds to 887 to 898 (KLFGISIISAVR). The chain crosses the membrane as a helical span at residues 899–919 (VGLLLAPGGEFAFVAFGEAVN). Residues 920-928 (QGIMTPQLS) lie on the Chloroplast intermembrane side of the membrane. A helical membrane pass occupies residues 929-949 (SLLFLVVGISMALTPWLAAGG). Residues 950–1174 (QLIASRFELQ…NQIIEGTLAI (225 aa)) are Stromal-facing. The 118-residue stretch at 975–1092 (QGHIIICGFG…EKAGATAVVP (118 aa)) folds into the RCK N-terminal domain. The tract at residues 1141-1174 (SLGYGFSRSTSKPKPPSPSETSDDNQIIEGTLAI) is disordered.

It belongs to the monovalent cation:proton antiporter 2 (CPA2) transporter (TC 2.A.37) family. KEA (TC 2.A.37.1) subfamily. Post-translationally, acetylated at Lys-170 by the stromal acetyltransferase enzyme NSI. In terms of tissue distribution, detected in leaves, stems and flowers. Expressed in shoots and roots. Mainly localized to leaf veins, hypocotyls, mesophylls and guard cells. Accumulates at high levels in small and dividing plastids (at protein level).

Its subcellular location is the plastid. The protein resides in the chloroplast inner membrane. The protein localises to the plastid inner membrane. The enzyme catalyses K(+)(in) + H(+)(out) = K(+)(out) + H(+)(in). Repressed by sodium ions Na(+). Electroneutral K(+)/H(+) efflux antiporter modulating monovalent cation and pH homeostasis in plastids, especially during plastid division and thylakoid membrane formation. Transports K(+) and Cs(+) preferentially relative to Na(+) or Li(+). May function in osmotic adjustment. Collaboratively with KEA1, adjusts alkaline stromal pH upon light to dark transitions in plastids. Together with KEA1, critical for chloroplast development, including chloroplast RNA-metabolism (e.g. rRNA maturation, polysome loading and RNA-protein interactions) and plastid gene expression (PGE), ion homeostasis, and photosynthesis. Contributes, during early seedling development, to the regulation of photosynthesis and abscisic acid- (ABA-) mediated primary root growth in a sucrose-dependent manner. Involved in the regulation of reactive oxygen and nitrogen species (ROS and RNS) metabolism. Required in roots for rapid hyperosmotic-induced Ca(2+) responses and for osmo-sensory potentiation in hyperosmotic conditions. May counteract resilience to drought and salt stress, involving photorespiratory pathway and stomata closure. The protein is K(+) efflux antiporter 2, chloroplastic of Arabidopsis thaliana (Mouse-ear cress).